Here is a 203-residue protein sequence, read N- to C-terminus: WUSCHEL-related homeobox 3 (203 aa).

The homeobox; WUS-type DNA-binding region spans 4 to 68; it reads TPSTRWCPTP…NHKARERQRL (65 aa). Disordered stretches follow at residues 73 to 95, 109 to 135, and 180 to 203; these read CARH…TAAA, LHHH…QQQQ, and STSG…TSTN. The span at 80-91 shows a compositional bias: pro residues; that stretch reads PSPPSSTVPPAP. The segment covering 109 to 118 has biased composition (basic residues); that stretch reads LHHHHHHHHP. Composition is skewed to low complexity over residues 119–135 and 190–203; these read YAAA…QQQQ and CSSS…TSTN.

Belongs to the WUS homeobox family.

The protein resides in the nucleus. Its function is as follows. Transcription factor which may be involved in developmental processes. The polypeptide is WUSCHEL-related homeobox 3 (WOX3) (Oryza sativa subsp. indica (Rice)).